The chain runs to 379 residues: Putative cyclic ADP-D-ribose synthase TIR2 (379 aa).

The 126-residue stretch at 254 to 379 (KVYDVFISHS…TISWTTGLVK (126 aa)) folds into the TIR domain. The active site involves E335.

In terms of assembly, homodimer.

It is found in the cytoplasm. Activated upon phage infection. One of 2 TIR-like protein components of the Thoeris antiviral defense system, composed of ThsA, TIR1 (thsB1) and TIR2 (thsB2). Phage infection activates this protein; by 70 minutes post-infection with phage SPO1, TIR2 generates a signal molecule that in turn activates the NAD(+) hydrolase activity of ThsA (tested with B.cereus). The signal is similar to cyclic ADP-D-ribose, but how it differs is unknown. Expression of Thoeris in B.subtilis (strain BEST7003) confers resistance to phages phi29, phi3T, SPBeta, SBSphi11, SBSphi13, SBSphiJ, SPO1 and SPR but not SBSphiC. The TIR paralogs confer resistance to different phages; this subunit confers resistance to phi3T, SPBeta, SBSphi13, SBSphiJ, SPO1 and SPR but not phi29, SBSphi11 or SBSphiC. There is overlap in the phage range for this system, both TIR1 and TIR2 are activated by SBSphi13, SBSphiJ, SPO1 and SPR. Probably hydrolyzes NAD(+) to make a cyclic ADP-D-ribose (cADPR) signaling molecule; might make 3'cADPR. This is Putative cyclic ADP-D-ribose synthase TIR2 from Cytobacillus dafuensis (Bacillus dafuensis).